The following is a 20-amino-acid chain: Unknown protein NF028 from 2D-PAGE (20 aa).

The protein is Unknown protein NF028 from 2D-PAGE of Naegleria fowleri (Brain eating amoeba).